A 384-amino-acid polypeptide reads, in one-letter code: Tryptophan--tRNA ligase (384 aa).

The 'HIGH' region motif lies at 81 to 89; it reads PSGPMHIGH. A 'KMSKS' region motif is present at residues 252–256; the sequence is KMSAS.

Belongs to the class-I aminoacyl-tRNA synthetase family.

It localises to the cytoplasm. The catalysed reaction is tRNA(Trp) + L-tryptophan + ATP = L-tryptophyl-tRNA(Trp) + AMP + diphosphate + H(+). The protein is Tryptophan--tRNA ligase of Thermococcus kodakarensis (strain ATCC BAA-918 / JCM 12380 / KOD1) (Pyrococcus kodakaraensis (strain KOD1)).